The primary structure comprises 137 residues: Large ribosomal subunit protein uL16 (137 aa).

The protein belongs to the universal ribosomal protein uL16 family. Part of the 50S ribosomal subunit.

Its function is as follows. Binds 23S rRNA and is also seen to make contacts with the A and possibly P site tRNAs. This chain is Large ribosomal subunit protein uL16, found in Rhodopseudomonas palustris (strain BisA53).